Consider the following 181-residue polypeptide: ATP synthase subunit b 2 (181 aa).

Positions 1-12 (MAEGHGTTAHTG) are enriched in low complexity. Positions 1 to 20 (MAEGHGTTAHTGAEGGHKAP) are disordered. A helical transmembrane segment spans residues 33-53 (LVSLLIAFVALYLIVSKVALP).

It belongs to the ATPase B chain family. F-type ATPases have 2 components, F(1) - the catalytic core - and F(0) - the membrane proton channel. F(1) has five subunits: alpha(3), beta(3), gamma(1), delta(1), epsilon(1). F(0) has three main subunits: a(1), b(2) and c(10-14). The alpha and beta chains form an alternating ring which encloses part of the gamma chain. F(1) is attached to F(0) by a central stalk formed by the gamma and epsilon chains, while a peripheral stalk is formed by the delta and b chains.

It localises to the cell inner membrane. F(1)F(0) ATP synthase produces ATP from ADP in the presence of a proton or sodium gradient. F-type ATPases consist of two structural domains, F(1) containing the extramembraneous catalytic core and F(0) containing the membrane proton channel, linked together by a central stalk and a peripheral stalk. During catalysis, ATP synthesis in the catalytic domain of F(1) is coupled via a rotary mechanism of the central stalk subunits to proton translocation. In terms of biological role, component of the F(0) channel, it forms part of the peripheral stalk, linking F(1) to F(0). The b'-subunit is a diverged and duplicated form of b found in plants and photosynthetic bacteria. This chain is ATP synthase subunit b 2 (atpF2), found in Rhodopseudomonas palustris (strain BisA53).